A 526-amino-acid polypeptide reads, in one-letter code: MSSTSQKRKKIQKKFKNRGYNLKFDALDEILVFADQFPDDDDGEAIDLLLDNLQETHKSSTVDAESVRGLINRLLGAHNAPEEPTTSASSLAIIDAFLVPKFGYDSVKKKFNEHTSSLPIHGEASAKTALYRERFMLLSQRVSRAEHFSRPAFDAEMSQFENNEISSIQSLISQRGRKWVMGVISQLEDGHFYLEDLSASVEIDLSKAKITTGFFTENTIILAEGEMQVNGIFQVITCGFPPLEDRDKTLKAHSEYDFFGGGTLTKEEMIKLADLERQAVNDTFVILSDIWLDDEEVMRKLETVLDGFESVETVPSLFVFMGNFCSRPCNLSFGSYSSLREQFGKLGRMIGNHPRLKENSRFLFIPGPEDAGPSTVLPRCALPKYLTEELRNIIPNAIFSSNPCRVKFYNQEIVFFRQDLLYRMRRSCLVTPSSEETNDPFKHLVYTITHQSHLCPLPLMVQPIIWNYDHALRLYPTPHTIVLGDKSEQEVCKFGGTTCFNPGSFSTDSTFVAYRPSTQEVELSAL.

This sequence belongs to the DNA polymerase epsilon subunit B family. Subunit of the DNA polymerase II. Interacts with POL2A (via C-terminus).

It localises to the nucleus. Functionally, as accessory component of DNA polymerase II participates in chromosomal DNA replication. Required for the timing and determination of cell fate during plant embryogenesis and root pole development, by promoting cell cycle and cell type patterning. Necessary for proper shoot (SAM) and root apical meristem (RAM) functions. Is essential to promote the first divisions of the zygote. The polypeptide is DNA polymerase epsilon subunit B (Arabidopsis thaliana (Mouse-ear cress)).